A 103-amino-acid chain; its full sequence is UPF0145 protein BT9727_3206 (103 aa).

Belongs to the UPF0145 family.

This is UPF0145 protein BT9727_3206 from Bacillus thuringiensis subsp. konkukian (strain 97-27).